We begin with the raw amino-acid sequence, 145 residues long: Mitochondrial import receptor subunit TOM20 homolog (145 aa).

The Mitochondrial intermembrane segment spans residues 1–6; the sequence is MVGRNS. The chain crosses the membrane as a helical span at residues 7 to 24; sequence AIAAGVCGALFIGYCIYF. Residues 25–145 lie on the Cytoplasmic side of the membrane; that stretch reads DRKRRSDPNF…AQSLAEDDVE (121 aa). Residues Lys35, Lys56, Lys61, and Lys68 each participate in a glycyl lysine isopeptide (Lys-Gly) (interchain with G-Cter in ubiquitin) cross-link. Residues Ser135 and Ser138 each carry the phosphoserine modification.

It belongs to the Tom20 family. In terms of assembly, forms part of the preprotein translocase complex of the outer mitochondrial membrane (TOM complex) which consists of at least 7 different proteins (TOMM5, TOMM6, TOMM7, TOMM20, TOMM22, TOMM40 and TOMM70). Interacts with TOM22. Interacts with APEX1. Interacts with TBC1D21. Upon mitochondrial depolarization, interacts with PINK1; the interaction is required for PINK1-TOM-TIM23 supercomplex formation which is critical for PINK1 stabilization at the outer mitochondrial membrane, kinase activation and downstream mitophagy. Ubiquitinated by PRKN during mitophagy, leading to its degradation and enhancement of mitophagy. Deubiquitinated by USP30. As to expression, expressed in brain, kidney, stomach, colon, jejunum, ileum, testis, ovary and oviduct (at protein level). In the brain, expressed in neural cells of the cerebrum and cerebellum (at protein level). In the kidney, expressed in the proximal to distal tubule in the cortex and the outer and inner zones of the medulla (at protein level). In the stomach, expressed in the basal layer of stratified squamous epithelia in the forestomach and in the gastric pit and fundic gland of the glandular stomach (at protein level). Expressed in epithelial cells of the jejunum, ileum, and colon (at protein level). In the testis, expressed by spermatocytes and spermatogonia (at protein level). In the ovaries, expressed by follicular epithelial cells and corpus luteum cells (at protein level). In the oviduct, expressed in the epithelia of the isthmus and the ciliated cells of the ampulla (at protein level). Expressed in the sperm midpiece (at protein level).

The protein localises to the mitochondrion outer membrane. Functionally, central component of the receptor complex responsible for the recognition and translocation of cytosolically synthesized mitochondrial preproteins. Together with TOM22 functions as the transit peptide receptor at the surface of the mitochondrion outer membrane and facilitates the movement of preproteins into the TOM40 translocation pore. Required for the translocation across the mitochondrial outer membrane of cytochrome P450 monooxygenases. This is Mitochondrial import receptor subunit TOM20 homolog (Tomm20) from Mus musculus (Mouse).